A 227-amino-acid chain; its full sequence is MNHLDRLERKIGYRFNDIALLKQALTHRSAATQHNERLEFLGDSILNFTIAEALYHQFPRCNEGELSRMRATLVREPTLAILARQFELGDYMSLGSGELKNGGFRRESILADCVEAIIGAMSLDQGLAVTTQVIRNWYQQLLAEIKPGDNQKDAKTRLQEYLQGKHLPLPTYEVVNIQGEAHCQIFTVKCKVKSAEKIDRTFVAKGSSRRKAEQAAAEQILKELDIK.

The 123-residue stretch at 4–126 (LDRLERKIGY…IIGAMSLDQG (123 aa)) folds into the RNase III domain. Position 39 (glutamate 39) interacts with Mg(2+). The active site involves aspartate 43. Mg(2+) is bound by residues aspartate 112 and glutamate 115. Glutamate 115 is a catalytic residue. One can recognise a DRBM domain in the interval 153–226 (DAKTRLQEYL…AEQILKELDI (74 aa)).

This sequence belongs to the ribonuclease III family. In terms of assembly, homodimer. It depends on Mg(2+) as a cofactor.

Its subcellular location is the cytoplasm. The enzyme catalyses Endonucleolytic cleavage to 5'-phosphomonoester.. Functionally, digests double-stranded RNA. Involved in the processing of primary rRNA transcript to yield the immediate precursors to the large and small rRNAs (23S and 16S). Processes some mRNAs, and tRNAs when they are encoded in the rRNA operon. Processes pre-crRNA and tracrRNA of type II CRISPR loci if present in the organism. This chain is Ribonuclease 3, found in Haemophilus influenzae (strain ATCC 51907 / DSM 11121 / KW20 / Rd).